The chain runs to 425 residues: tRNA(Ile)-lysidine synthase (425 aa).

Residue 27-32 (SGGLDS) coordinates ATP.

This sequence belongs to the tRNA(Ile)-lysidine synthase family.

It is found in the cytoplasm. It catalyses the reaction cytidine(34) in tRNA(Ile2) + L-lysine + ATP = lysidine(34) in tRNA(Ile2) + AMP + diphosphate + H(+). Functionally, ligates lysine onto the cytidine present at position 34 of the AUA codon-specific tRNA(Ile) that contains the anticodon CAU, in an ATP-dependent manner. Cytidine is converted to lysidine, thus changing the amino acid specificity of the tRNA from methionine to isoleucine. This chain is tRNA(Ile)-lysidine synthase, found in Streptococcus pneumoniae (strain JJA).